The chain runs to 709 residues: Alpha-1,2-mannosyltransferase MNN24 (709 aa).

The Cytoplasmic segment spans residues 1-9 (MFSIPVSSK). The chain crosses the membrane as a helical span at residues 10–30 (TVRLILVSLLLITLINILAAF). Over 31 to 709 (QRSTLSSWFP…KNHIEFLEIS (679 aa)) the chain is Extracellular. N-linked (GlcNAc...) asparagine glycosylation occurs at Asn317.

This sequence belongs to the MNN1/MNT family.

The protein resides in the golgi apparatus membrane. Its pathway is protein modification; protein glycosylation. Alpha-1,2-mannosyltransferase required for cell wall integrity. Responsible for addition of the first alpha-1,2-linked mannose to form the branches on the mannan backbone of oligosaccharides. Addition of alpha-1,2-mannose is required for stabilization of the alpha-1,6-mannose backbone and hence regulates mannan fibril length; and is important for both immune recognition and virulence. The polypeptide is Alpha-1,2-mannosyltransferase MNN24 (MNN24) (Candida albicans (strain SC5314 / ATCC MYA-2876) (Yeast)).